Consider the following 435-residue polypeptide: MTSENNNTEFAELKIRDKIFKLPILKASIGQDVIDISKVYSEADCFTYDPGFMSTASCRSTITYIDGDQGILRHRGYDIKDLAEKSDFLEVAYLLIYGELPNNKQYNDFTKKVAHHALVNERLHYLFQTFCSSSHPMAIMLAAVGSLSAFYPDLLNFFKEADYELTAIRMIAKIPTIAAMSYKYSIGQPFVYPDNSLDFTENFLHMMFATPCEKYKVNPVIKNALNKIFILHADHEQNASTSTVRIAGSSGANPFACVSTGIASLWGPAHGGANEAVINMLKEIGSVENIPKYIAKAKDKNDNFRLMGFGHRVYKNYDPRAAVLKETCKEVLKELGQLDNNPLLQIAIELEAIALKDEYFIERKLYPNVDFYSGIIYKAMGIPPQMFTVLFATARTVGWMAQWKEMHEDPEQKISRPRQLYTGQVHREYKTIKER.

Catalysis depends on residues His-311 and Asp-370.

This sequence belongs to the citrate synthase family.

The enzyme catalyses oxaloacetate + acetyl-CoA + H2O = citrate + CoA + H(+). It participates in carbohydrate metabolism; tricarboxylic acid cycle; isocitrate from oxaloacetate: step 1/2. The chain is Citrate synthase (gltA) from Rickettsia bellii (strain RML369-C).